Consider the following 145-residue polypeptide: Deoxyuridine 5'-triphosphate nucleotidohydrolase (145 aa).

Residues 62 to 64, Asn-75, 79 to 81, and Lys-89 each bind substrate; these read RSG and TVD.

It belongs to the dUTPase family. Mg(2+) is required as a cofactor.

It catalyses the reaction dUTP + H2O = dUMP + diphosphate + H(+). The protein operates within pyrimidine metabolism; dUMP biosynthesis; dUMP from dCTP (dUTP route): step 2/2. Functionally, this enzyme is involved in nucleotide metabolism: it produces dUMP, the immediate precursor of thymidine nucleotides and it decreases the intracellular concentration of dUTP so that uracil cannot be incorporated into DNA. The protein is Deoxyuridine 5'-triphosphate nucleotidohydrolase of Helicobacter pylori (strain J99 / ATCC 700824) (Campylobacter pylori J99).